The chain runs to 122 residues: Basic phospholipase A2 homolog Gln49-PLA2 (122 aa).

Disulfide bonds link Cys26–Cys115, Cys28–Cys44, Cys43–Cys95, Cys49–Cys122, Cys50–Cys88, Cys57–Cys81, and Cys75–Cys86.

This sequence belongs to the phospholipase A2 family. Group II subfamily. Q49 sub-subfamily. Monomer. In terms of tissue distribution, expressed by the venom gland.

Its subcellular location is the secreted. Functionally, snake venom phospholipase A2 (PLA2) homolog that shows local myotoxicity, apparent anticoagulant activity, and neurotoxicity. Shows analgesic effect on mice due to a decrease of action potentials and nerve conduction velocity. These effects are caused by inhibition of voltage-gated ion channels (potassium (Kv) and sodium (Nav)). In addition, analgesic effects are antagonized by naloxone, implying the mechanism of action is correlated with opioid receptors (probably indirectly). Does not show detectable PLA2 activity on egg yolk phospholipids. The chain is Basic phospholipase A2 homolog Gln49-PLA2 from Gloydius ussuriensis (Ussuri mamushi).